A 267-amino-acid polypeptide reads, in one-letter code: Membrane-spanning 4-domains subfamily A member 10 (267 aa).

Over 1-61 (MKAEATVIPS…KKSSLLKELG (61 aa)) the chain is Cytoplasmic. A helical membrane pass occupies residues 62 to 82 (AFHITIALLHLVFGGYLASIV). At 83 to 91 (KNLHLVVLK) the chain is on the extracellular side. The chain crosses the membrane as a helical span at residues 92–112 (SWYPFWGAASFLISGILAITM). The Cytoplasmic portion of the chain corresponds to 113–121 (KTFSKTYLK). A helical membrane pass occupies residues 122–142 (MLCLMTNLISLFCVLSGLFVI). At 143 to 171 (SKDLFLESPFESPIWRMYPNSTVHIQRLE) the chain is on the extracellular side. A helical membrane pass occupies residues 172–192 (LALLCFTVLELFLPVPTAVTA). The Cytoplasmic portion of the chain corresponds to 193-267 (WRGDCPSAKN…GAAIWTQTAN (75 aa)).

It belongs to the MS4A family.

It localises to the membrane. Functionally, may be involved in signal transduction as a component of a multimeric receptor complex. In Homo sapiens (Human), this protein is Membrane-spanning 4-domains subfamily A member 10 (MS4A10).